The following is a 342-amino-acid chain: Ribosomal RNA small subunit methyltransferase C (342 aa).

This sequence belongs to the methyltransferase superfamily. RsmC family. As to quaternary structure, monomer.

The protein resides in the cytoplasm. It carries out the reaction guanosine(1207) in 16S rRNA + S-adenosyl-L-methionine = N(2)-methylguanosine(1207) in 16S rRNA + S-adenosyl-L-homocysteine + H(+). Specifically methylates the guanine in position 1207 of 16S rRNA in the 30S particle. In Salmonella heidelberg (strain SL476), this protein is Ribosomal RNA small subunit methyltransferase C.